A 260-amino-acid chain; its full sequence is 3-alpha-(or 20-beta)-hydroxysteroid dehydrogenase (260 aa).

Arginine 17, methionine 19, aspartate 38, aspartate 61, valine 62, asparagine 88, tyrosine 153, lysine 157, valine 186, threonine 188, and threonine 191 together coordinate NAD(+). The active-site Proton acceptor is tyrosine 153.

The protein belongs to the short-chain dehydrogenases/reductases (SDR) family. As to quaternary structure, homotetramer.

The enzyme catalyses androstan-3alpha,17beta-diol + NAD(+) = 17beta-hydroxyandrostanone + NADH + H(+). It participates in lipid metabolism; steroid degradation. Its function is as follows. Probably involved in steroid metabolism. This is 3-alpha-(or 20-beta)-hydroxysteroid dehydrogenase (fabG3) from Mycobacterium bovis (strain ATCC BAA-935 / AF2122/97).